A 343-amino-acid polypeptide reads, in one-letter code: L-threonine 3-dehydrogenase (343 aa).

A Zn(2+)-binding site is contributed by Cys-40. Residues Thr-42 and His-45 each act as charge relay system in the active site. Zn(2+) contacts are provided by His-65, Glu-66, Cys-95, Cys-98, Cys-101, and Cys-109. NAD(+) is bound by residues Ile-177, Asp-197, Arg-202, 264–266 (LGI), and 288–289 (IY).

The protein belongs to the zinc-containing alcohol dehydrogenase family. In terms of assembly, homotetramer. Requires Zn(2+) as cofactor.

Its subcellular location is the cytoplasm. It carries out the reaction L-threonine + NAD(+) = (2S)-2-amino-3-oxobutanoate + NADH + H(+). It functions in the pathway amino-acid degradation; L-threonine degradation via oxydo-reductase pathway; glycine from L-threonine: step 1/2. In terms of biological role, catalyzes the NAD(+)-dependent oxidation of L-threonine to 2-amino-3-ketobutyrate. The sequence is that of L-threonine 3-dehydrogenase from Vibrio atlanticus (strain LGP32) (Vibrio splendidus (strain Mel32)).